Reading from the N-terminus, the 740-residue chain is Phosphoribosylformylglycinamidine synthase subunit PurL (740 aa).

His50 is a catalytic residue. ATP is bound by residues Tyr53 and Lys92. Position 94 (Glu94) interacts with Mg(2+). Substrate contacts are provided by residues 95–98 (SHNH) and Arg117. His96 acts as the Proton acceptor in catalysis. Mg(2+) is bound at residue Asp118. Gln241 is a binding site for substrate. Asp269 serves as a coordination point for Mg(2+). Position 313–315 (313–315 (ESQ)) interacts with substrate. ATP-binding residues include Asp495 and Gly532. Position 533 (Asn533) interacts with Mg(2+). Residue Ser535 participates in substrate binding.

It belongs to the FGAMS family. As to quaternary structure, monomer. Part of the FGAM synthase complex composed of 1 PurL, 1 PurQ and 2 PurS subunits.

Its subcellular location is the cytoplasm. The catalysed reaction is N(2)-formyl-N(1)-(5-phospho-beta-D-ribosyl)glycinamide + L-glutamine + ATP + H2O = 2-formamido-N(1)-(5-O-phospho-beta-D-ribosyl)acetamidine + L-glutamate + ADP + phosphate + H(+). It functions in the pathway purine metabolism; IMP biosynthesis via de novo pathway; 5-amino-1-(5-phospho-D-ribosyl)imidazole from N(2)-formyl-N(1)-(5-phospho-D-ribosyl)glycinamide: step 1/2. In terms of biological role, part of the phosphoribosylformylglycinamidine synthase complex involved in the purines biosynthetic pathway. Catalyzes the ATP-dependent conversion of formylglycinamide ribonucleotide (FGAR) and glutamine to yield formylglycinamidine ribonucleotide (FGAM) and glutamate. The FGAM synthase complex is composed of three subunits. PurQ produces an ammonia molecule by converting glutamine to glutamate. PurL transfers the ammonia molecule to FGAR to form FGAM in an ATP-dependent manner. PurS interacts with PurQ and PurL and is thought to assist in the transfer of the ammonia molecule from PurQ to PurL. The polypeptide is Phosphoribosylformylglycinamidine synthase subunit PurL (Brucella canis (strain ATCC 23365 / NCTC 10854 / RM-666)).